Consider the following 273-residue polypeptide: Putative pyruvate, phosphate dikinase regulatory protein 2 (273 aa).

151–158 contributes to the ADP binding site; the sequence is GVSRTSKT.

Belongs to the pyruvate, phosphate/water dikinase regulatory protein family. PDRP subfamily.

It catalyses the reaction N(tele)-phospho-L-histidyl/L-threonyl-[pyruvate, phosphate dikinase] + ADP = N(tele)-phospho-L-histidyl/O-phospho-L-threonyl-[pyruvate, phosphate dikinase] + AMP + H(+). It carries out the reaction N(tele)-phospho-L-histidyl/O-phospho-L-threonyl-[pyruvate, phosphate dikinase] + phosphate + H(+) = N(tele)-phospho-L-histidyl/L-threonyl-[pyruvate, phosphate dikinase] + diphosphate. Functionally, bifunctional serine/threonine kinase and phosphorylase involved in the regulation of the pyruvate, phosphate dikinase (PPDK) by catalyzing its phosphorylation/dephosphorylation. The polypeptide is Putative pyruvate, phosphate dikinase regulatory protein 2 (Syntrophomonas wolfei subsp. wolfei (strain DSM 2245B / Goettingen)).